A 348-amino-acid polypeptide reads, in one-letter code: GTP 3',8-cyclase (348 aa).

Positions 24-242 constitute a Radical SAM core domain; it reads PFGRAVTYLR…EKQFTLTDID (219 aa). Residue arginine 33 coordinates GTP. Residues cysteine 40 and cysteine 44 each contribute to the [4Fe-4S] cluster site. Tyrosine 46 contacts S-adenosyl-L-methionine. Cysteine 47 is a [4Fe-4S] cluster binding site. Arginine 82 contacts GTP. Glycine 86 serves as a coordination point for S-adenosyl-L-methionine. Residue threonine 115 coordinates GTP. Serine 139 provides a ligand contact to S-adenosyl-L-methionine. Residue lysine 175 coordinates GTP. Position 209 (methionine 209) interacts with S-adenosyl-L-methionine. [4Fe-4S] cluster is bound by residues cysteine 272 and cysteine 275. 277-279 is a binding site for GTP; it reads RVR. Cysteine 289 is a [4Fe-4S] cluster binding site.

This sequence belongs to the radical SAM superfamily. MoaA family. Monomer and homodimer. [4Fe-4S] cluster is required as a cofactor.

The catalysed reaction is GTP + AH2 + S-adenosyl-L-methionine = (8S)-3',8-cyclo-7,8-dihydroguanosine 5'-triphosphate + 5'-deoxyadenosine + L-methionine + A + H(+). It participates in cofactor biosynthesis; molybdopterin biosynthesis. Functionally, catalyzes the cyclization of GTP to (8S)-3',8-cyclo-7,8-dihydroguanosine 5'-triphosphate. This chain is GTP 3',8-cyclase, found in Rhizobium leguminosarum bv. trifolii (strain WSM2304).